The chain runs to 273 residues: 4-hydroxy-tetrahydrodipicolinate reductase (273 aa).

NAD(+) contacts are provided by residues 11 to 16 (GALGRM), 102 to 104 (GTT), and 126 to 129 (SPNF). The active-site Proton donor/acceptor is H159. H160 contacts (S)-2,3,4,5-tetrahydrodipicolinate. K163 serves as the catalytic Proton donor. 169 to 170 (GT) contributes to the (S)-2,3,4,5-tetrahydrodipicolinate binding site.

It belongs to the DapB family. As to quaternary structure, homotetramer.

It is found in the cytoplasm. It carries out the reaction (S)-2,3,4,5-tetrahydrodipicolinate + NAD(+) + H2O = (2S,4S)-4-hydroxy-2,3,4,5-tetrahydrodipicolinate + NADH + H(+). The enzyme catalyses (S)-2,3,4,5-tetrahydrodipicolinate + NADP(+) + H2O = (2S,4S)-4-hydroxy-2,3,4,5-tetrahydrodipicolinate + NADPH + H(+). Its pathway is amino-acid biosynthesis; L-lysine biosynthesis via DAP pathway; (S)-tetrahydrodipicolinate from L-aspartate: step 4/4. Functionally, catalyzes the conversion of 4-hydroxy-tetrahydrodipicolinate (HTPA) to tetrahydrodipicolinate. This Buchnera aphidicola subsp. Cinara cedri (strain Cc) protein is 4-hydroxy-tetrahydrodipicolinate reductase.